A 196-amino-acid chain; its full sequence is 3-dehydroquinate dehydratase (196 aa).

3-dehydroquinate is bound by residues 23-25 (ELR) and arginine 45. Residue histidine 98 is the Proton donor/acceptor of the active site. Lysine 122 serves as the catalytic Schiff-base intermediate with substrate. Residues arginine 159 and glutamine 182 each coordinate 3-dehydroquinate.

This sequence belongs to the type-I 3-dehydroquinase family. As to quaternary structure, homodimer.

The catalysed reaction is 3-dehydroquinate = 3-dehydroshikimate + H2O. It participates in metabolic intermediate biosynthesis; chorismate biosynthesis; chorismate from D-erythrose 4-phosphate and phosphoenolpyruvate: step 3/7. Functionally, involved in the third step of the chorismate pathway, which leads to the biosynthesis of aromatic amino acids. Catalyzes the cis-dehydration of 3-dehydroquinate (DHQ) and introduces the first double bond of the aromatic ring to yield 3-dehydroshikimate. The sequence is that of 3-dehydroquinate dehydratase from Archaeoglobus fulgidus (strain ATCC 49558 / DSM 4304 / JCM 9628 / NBRC 100126 / VC-16).